The following is a 474-amino-acid chain: Aspartyl/glutamyl-tRNA(Asn/Gln) amidotransferase subunit B (474 aa).

Belongs to the GatB/GatE family. GatB subfamily. As to quaternary structure, heterotrimer of A, B and C subunits.

The catalysed reaction is L-glutamyl-tRNA(Gln) + L-glutamine + ATP + H2O = L-glutaminyl-tRNA(Gln) + L-glutamate + ADP + phosphate + H(+). It catalyses the reaction L-aspartyl-tRNA(Asn) + L-glutamine + ATP + H2O = L-asparaginyl-tRNA(Asn) + L-glutamate + ADP + phosphate + 2 H(+). In terms of biological role, allows the formation of correctly charged Asn-tRNA(Asn) or Gln-tRNA(Gln) through the transamidation of misacylated Asp-tRNA(Asn) or Glu-tRNA(Gln) in organisms which lack either or both of asparaginyl-tRNA or glutaminyl-tRNA synthetases. The reaction takes place in the presence of glutamine and ATP through an activated phospho-Asp-tRNA(Asn) or phospho-Glu-tRNA(Gln). The protein is Aspartyl/glutamyl-tRNA(Asn/Gln) amidotransferase subunit B of Helicobacter hepaticus (strain ATCC 51449 / 3B1).